The primary structure comprises 509 residues: MREANADADPPDEVRIFDTTLRDGEQTPGVALTPEEKLRIARKLDEIGVDTIEAGFAAASEGELKAIRRIAREELDAEVCSMARMVKGDVDAAVEAEADAVHIVVPTSEVHVKKKLRMDREEVLERAREVVEYARDHGLTVEISTEDGTRTELEYLYEVFDACLEAGAERLGYNDTVGVMAPEGMFLAVKKLRERVGEDVILSVHCHDDFGMATANTVAAVRAGARQVHVTVNGIGERAGNAALEEVVVVLEELYGVDTGIRTERLTELSKLVERLTGVRVPPNKAVVGENAFTHESGIHADGILKDESTYEPIPPEKVGHERRFVLGKHVGTSVIRKKLKQMGVDVDDEQLLEILRRLKRLGDRGKRITEADLRAIAEDVLGRPAERDIEVEDFTTVTGKRTIPTASIVVKIDGTRKEAASTGVGPVDATIKALERALKDQGIDFELVEYRAEALTGGTDAITHVDVKLRDPETGDIVHSGSSREDIVVASLEAFIDGINSLMARKRS.

In terms of domain architecture, Pyruvate carboxyltransferase spans 14-267; the sequence is VRIFDTTLRD…DTGIRTERLT (254 aa).

Belongs to the alpha-IPM synthase/homocitrate synthase family. As to quaternary structure, homodimer.

The catalysed reaction is pyruvate + acetyl-CoA + H2O = (3R)-citramalate + CoA + H(+). The protein operates within amino-acid biosynthesis; L-isoleucine biosynthesis; 2-oxobutanoate from pyruvate: step 1/3. Functionally, catalyzes the condensation of pyruvate and acetyl-coenzyme A to form (R)-citramalate. The polypeptide is Putative (R)-citramalate synthase CimA (cimA) (Methanopyrus kandleri (strain AV19 / DSM 6324 / JCM 9639 / NBRC 100938)).